Here is a 245-residue protein sequence, read N- to C-terminus: MGRLDGKVIVLTAAAQGIGRASALAFAREGAKVIATDINESKLQELESYRGIQTRVLDVTKKRQIDQFASEIERIDVLFNVAGFVHHGTILDCEEKDWDFSMNLNVRSMFLMIKAFLPKMLAQKSGNIINMSSVASSIKGVENRCVYSATKAAVIGLTKSVAADFIQQGIRCNCVCPGTVDTPSLQERIQARDNPKEALKTFLNRQKTGRFASAEEVALLCVYLASDESAYVTGNPVIIDGGWSL.

Residues 16 to 18, aspartate 37, and aspartate 58 contribute to the NAD(+) site; that span reads QGI. Arginine 144 lines the substrate pocket. Tyrosine 147 (proton acceptor) is an active-site residue. NAD(+) is bound by residues lysine 151 and 180–184; that span reads VDTPS. Residues arginine 188 and arginine 205 each contribute to the substrate site.

It belongs to the short-chain dehydrogenases/reductases (SDR) family. Homotetramer. As to expression, detected in liver, spleen and macrophages. Widely expressed.

It localises to the cytoplasm. The enzyme catalyses cis-4-hydroxy-L-proline + NAD(+) = 4-oxo-L-proline + NADH + H(+). The catalysed reaction is (R)-3-hydroxybutanoate + NAD(+) = acetoacetate + NADH + H(+). Its pathway is amino-acid metabolism. It functions in the pathway siderophore biosynthesis. NAD(H)-dependent dehydrogenase/reductase with a preference for cyclic substrates. Catalyzes stereoselective conversion of 4-oxo-L-proline to cis-4-hydroxy-L-proline, likely a detoxification mechanism for ketoprolines. Mediates the formation of 2,5-dihydroxybenzoate (2,5-DHBA), a siderophore that chelates free cytoplasmic iron and associates with LCN2, thereby regulating iron transport and homeostasis while protecting cells against free radical-induced oxidative stress. The iron-siderophore complex is imported into mitochondria, providing an iron source for mitochondrial metabolic processes in particular heme synthesis. May act as a 3-hydroxybutyrate dehydrogenase. In terms of biological role, (Microbial infection) May play a role in susceptibility to bacterial infection by providing an assimilable source of iron that is exploited by pathogenic bacteria. Host iron-siderophore complexes can be used by bacteria to promote their own growth and pathogenicity. The chain is Dehydrogenase/reductase SDR family member 6 from Mus musculus (Mouse).